A 374-amino-acid polypeptide reads, in one-letter code: RNA binding protein fox-1 homolog 3 (374 aa).

The span at 1-29 (MAQPYPPAQYPPPPQNGIPAEYAPPPPHP) shows a compositional bias: pro residues. A disordered region spans residues 1-105 (MAQPYPPAQY…QQPKRLHVSN (105 aa)). Residues 49-74 (TPAQTHPEQPGTEASTQPIAGTQTVP) show a composition bias toward polar residues. The RRM domain maps to 99–175 (KRLHVSNIPF…RKIEVNNATA (77 aa)). Residue Arg-223 is modified to Asymmetric dimethylarginine; alternate. An Omega-N-methylarginine; alternate modification is found at Arg-223. Arg-319 is modified (asymmetric dimethylarginine).

Post-translationally, phosphorylated. Widely expressed in brain, including in cerebral cortex, hippocampus, thalamus, caudate/putamen, cerebellum, as well as in the spinal cord (at protein level). Not expressed in all neuronal cells within a region, in cerebellum, expression is absent in Purkinje cells (at protein level). Expressed in the retina in the ganglion cells and some cells in the inner nuclear layer, but absent from the photoreceptor cells and most cells in the inner nuclear layer (at protein level).

The protein resides in the nucleus. It localises to the cytoplasm. Functionally, pre-mRNA alternative splicing regulator. Regulates alternative splicing of RBFOX2 to enhance the production of mRNA species that are targeted for nonsense-mediated decay (NMD). The protein is RNA binding protein fox-1 homolog 3 (Rbfox3) of Mus musculus (Mouse).